The primary structure comprises 644 residues: Adhesion G-protein coupled receptor F2 (644 aa).

Residues 1 to 18 (MIPAHWLYCLMLLLPIES) form the signal peptide. The Extracellular portion of the chain corresponds to 19 to 386 (CRILCQASSK…ESPVLTYITY (368 aa)). Residues Asn-155, Asn-219, Asn-293, and Asn-311 are each glycosylated (N-linked (GlcNAc...) asparagine). One can recognise a GAIN-B domain in the interval 233–377 (SRGSLGKNFT…SILMSPNTLE (145 aa)). 2 cysteine pairs are disulfide-bonded: Cys-329–Cys-356 and Cys-344–Cys-358. The segment at 329 to 377 (CVGWHSLESRWDWRACKTIQENSRQAVCRCRPNKLYTSFSILMSPNTLE) is GPS. The chain crosses the membrane as a helical span at residues 387-407 (IGLGISICSLIICLAIEVLVW). The Cytoplasmic portion of the chain corresponds to 408–422 (SQVTKTEISYLRHLC). A helical transmembrane segment spans residues 423-443 (IANIAATLLMADAWFIVASFL). Topologically, residues 444–465 (SGPVLHHNGCVAATFFVHFFYL) are extracellular. The helical transmembrane segment at 466–486 (SVFFWMLAKALLILYGILIVF) threads the bilayer. Topologically, residues 487 to 493 (HTLPKSC) are cytoplasmic. Residues 494 to 514 (LVASLFSVGYGCPLVIAIITL) form a helical membrane-spanning segment. Residues 515–541 (AVTEPGKGYLRPEACWLNWDMTKALLA) lie on the Extracellular side of the membrane. A helical transmembrane segment spans residues 542 to 562 (FVVPALAIVVVNLITVTMVII). Residues 563 to 585 (KTQRAAIGSSMFQEVRAIVRICK) lie on the Cytoplasmic side of the membrane. The helical transmembrane segment at 586 to 606 (NIAILTPLLGLTWGFGIATVI) threads the bilayer. Residues 607-610 (NGHS) are Extracellular-facing. Residues 611–631 (LAFHIIFSLLNALQVSPDAAV) form a helical membrane-spanning segment.

This sequence belongs to the G-protein coupled receptor 2 family. Adhesion G-protein coupled receptor (ADGR) subfamily. In terms of tissue distribution, mainly expressed in skin and heart, and very weakly in lung and spleen. Detected in all epidermal layers of skin.

It localises to the membrane. In terms of biological role, orphan receptor. This is Adhesion G-protein coupled receptor F2 (Adgrf2) from Mus musculus (Mouse).